The sequence spans 343 residues: Phosphate acyltransferase (343 aa).

Belongs to the PlsX family. In terms of assembly, homodimer. Probably interacts with PlsY.

The protein resides in the cytoplasm. The catalysed reaction is a fatty acyl-[ACP] + phosphate = an acyl phosphate + holo-[ACP]. Its pathway is lipid metabolism; phospholipid metabolism. In terms of biological role, catalyzes the reversible formation of acyl-phosphate (acyl-PO(4)) from acyl-[acyl-carrier-protein] (acyl-ACP). This enzyme utilizes acyl-ACP as fatty acyl donor, but not acyl-CoA. This Limosilactobacillus reuteri (strain DSM 20016) (Lactobacillus reuteri) protein is Phosphate acyltransferase.